The sequence spans 74 residues: Transcription attenuation protein MtrB (74 aa).

The protein belongs to the MtrB family. In terms of assembly, oligomer of 11 identical subunits arranged in doughnut-like structure.

Its function is as follows. Required for transcription attenuation control in the Trp operon. This trans-acting factor seems to recognize a 10 bases nucleotide sequence in the Trp leader transcript causing transcription termination. Binds the leader RNA only in presence of L-tryptophan. The sequence is that of Transcription attenuation protein MtrB (mtrB) from Geobacillus stearothermophilus (Bacillus stearothermophilus).